Consider the following 227-residue polypeptide: ATP-dependent dethiobiotin synthetase BioD (227 aa).

13 to 18 (DIGKTY) is an ATP binding site. Thr17 contributes to the Mg(2+) binding site. The active site involves Lys38. Ser42 serves as a coordination point for substrate. ATP-binding positions include Asp55, 116 to 119 (EGSG), and 179 to 180 (NN). Mg(2+) is bound by residues Asp55 and Glu116.

The protein belongs to the dethiobiotin synthetase family. Homodimer. Mg(2+) is required as a cofactor.

Its subcellular location is the cytoplasm. It carries out the reaction (7R,8S)-7,8-diammoniononanoate + CO2 + ATP = (4R,5S)-dethiobiotin + ADP + phosphate + 3 H(+). It functions in the pathway cofactor biosynthesis; biotin biosynthesis; biotin from 7,8-diaminononanoate: step 1/2. In terms of biological role, catalyzes a mechanistically unusual reaction, the ATP-dependent insertion of CO2 between the N7 and N8 nitrogen atoms of 7,8-diaminopelargonic acid (DAPA, also called 7,8-diammoniononanoate) to form a ureido ring. The sequence is that of ATP-dependent dethiobiotin synthetase BioD from Clostridium botulinum (strain Eklund 17B / Type B).